The sequence spans 352 residues: MNELQLLGPRAYGDALGTAVLKAIAEDFQVDEVLDIPFSGDGEHLWIWVEKRGLNTEEAARRIAKAAGVPLRTVSYAGLKDRQALTRQWFSVQLPGKADPDLSAAENDTLKILKTTRHKRKLQRGAHSANGFTLRLTQFNGDKAAIDERLQLIAKQGIPNYFGAQRFGHDGGNVVDARSWAARKALPEQRNVRSRLLSTARSFLFNQVLAARVADGTWQRAQVGDLLAFTDSRSFFPAGEAECSDPRLAILDLHPTGPQWGEGDSPAAGVVHDLEQGIAAREADLRDWLINAGMSHERRILRLPIGGLTWHYPEPDILQLEFVLPAGCFATVLVRELVDLVPVGQTDSPCVF.

Aspartate 81 functions as the Nucleophile in the catalytic mechanism. Residues 157–303 enclose the TRUD domain; sequence GIPNYFGAQR…MSHERRILRL (147 aa).

The protein belongs to the pseudouridine synthase TruD family.

It catalyses the reaction uridine(13) in tRNA = pseudouridine(13) in tRNA. In terms of biological role, responsible for synthesis of pseudouridine from uracil-13 in transfer RNAs. This chain is tRNA pseudouridine synthase D, found in Pseudomonas fluorescens (strain Pf0-1).